A 343-amino-acid chain; its full sequence is Fructose-1,6-bisphosphatase class 1 (343 aa).

Mg(2+) contacts are provided by Glu90, Asp109, Leu111, and Asp112. Substrate contacts are provided by residues 112–115 and Asn199; that span reads DGSS. Glu271 is a Mg(2+) binding site.

Belongs to the FBPase class 1 family. In terms of assembly, homotetramer. Mg(2+) serves as cofactor.

Its subcellular location is the cytoplasm. The catalysed reaction is beta-D-fructose 1,6-bisphosphate + H2O = beta-D-fructose 6-phosphate + phosphate. Its pathway is carbohydrate biosynthesis; Calvin cycle. The protein is Fructose-1,6-bisphosphatase class 1 of Rhodopseudomonas palustris (strain ATCC BAA-98 / CGA009).